The chain runs to 99 residues: Large ribosomal subunit protein P1 (99 aa).

As to quaternary structure, part of the 50S ribosomal subunit. Homodimer, it forms part of the ribosomal stalk which helps the ribosome interact with GTP-bound translation factors. Forms both a pentameric uL10/P0(P1)2(P1)2 and heptameric uL10/P0(P1)2(P1)2(P1)2 complex, where uL10/P0 forms an elongated spine to which the P1 dimers bind in a sequential fashion. The proportion of heptameric complexes increases during cell growth.

In terms of biological role, forms part of the ribosomal stalk, playing a central role in the interaction of the ribosome with GTP-bound translation factors. The polypeptide is Large ribosomal subunit protein P1 (Methanococcus vannielii).